The chain runs to 274 residues: Putative ankyrin repeat protein R597 (274 aa).

4 ANK repeats span residues 78–112, 114–144, 146–174, and 176–205; these read VGLP…NNND, PISE…SLKI, SRYH…DIQG, and NLSY…NIND.

This Acanthamoeba polyphaga mimivirus (APMV) protein is Putative ankyrin repeat protein R597.